We begin with the raw amino-acid sequence, 114 residues long: Beta-microseminoprotein (114 aa).

Residues methionine 1 to alanine 20 form the signal peptide. Cystine bridges form between cysteine 22–cysteine 70, cysteine 38–cysteine 62, cysteine 57–cysteine 93, cysteine 60–cysteine 69, and cysteine 84–cysteine 107.

It belongs to the beta-microseminoprotein family. Homodimer; Interacts with PI16.

The protein resides in the secreted. The polypeptide is Beta-microseminoprotein (MSMB) (Macaca mulatta (Rhesus macaque)).